Consider the following 419-residue polypeptide: Acyl-coenzyme A thioesterase 6 (419 aa).

Residues S232, D324, and H358 each act as charge relay system in the active site. The short motif at S417–L419 is the Peroxisome targeting signal element.

This sequence belongs to the C/M/P thioester hydrolase family. As to expression, highly expressed in white adipose tissue. Detected at lower levels in kidney, liver, brown adipose tissue and brain.

The protein resides in the peroxisome. It carries out the reaction pristanoyl-CoA + H2O = 2,6,10,14-tetramethylpentadecanoate + CoA + H(+). The catalysed reaction is phytanoyl-CoA + H2O = 3,7,11,15-tetramethylhexadecanoate + CoA + H(+). It participates in lipid metabolism; fatty acid metabolism. Catalyzes the hydrolysis of acyl-CoAs into free fatty acids and coenzyme A (CoASH), regulating their respective intracellular levels. Catalyzes the hydrolysis of phytanoyl-CoA and pristanoyl-CoA, two methyl-branched fatty acids derived from phytol, that enter the body via the diet. The polypeptide is Acyl-coenzyme A thioesterase 6 (Mus musculus (Mouse)).